A 43-amino-acid chain; its full sequence is Protein PsbN (43 aa).

Residues 4 to 24 (GILIVIFISCLLVSFTGYAVY) traverse the membrane as a helical segment.

It belongs to the PsbN family.

It localises to the plastid. Its subcellular location is the chloroplast thylakoid membrane. Its function is as follows. May play a role in photosystem I and II biogenesis. The chain is Protein PsbN from Coleochaete orbicularis (Charophycean green alga).